Reading from the N-terminus, the 196-residue chain is CASP-like protein 2U1 (196 aa).

Over 1-11 (MAPMECVRRRN) the chain is Cytoplasmic. A helical transmembrane segment spans residues 12–32 (VGELVLRCAATLVCMLSLMLL). Topologically, residues 33–58 (VRDQQIAVQEVGVTSVTTQLRYSSST) are extracellular. A helical membrane pass occupies residues 59-79 (GLVYLVYANGLVALYCFVVVL). At 80–95 (TSSFNGGSVMRRNKSG) the chain is on the cytoplasmic side. A helical membrane pass occupies residues 96 to 116 (AWALFVLDQVLACILLSAASA). Residues 117-148 (ASEIAFLVEKGAKKTIWDSKCIVYGHFCRMLE) are Extracellular-facing. Residues 149–169 (VSIATSFIAVIMLGSICVLSA) traverse the membrane as a helical segment. Residues 170 to 196 (KQLFQQYTHYARIVNMVKLKSTPNSLL) are Cytoplasmic-facing.

Belongs to the Casparian strip membrane proteins (CASP) family. In terms of assembly, homodimer and heterodimers.

It localises to the cell membrane. This chain is CASP-like protein 2U1, found in Pteridium aquilinum subsp. aquilinum (Bracken fern).